A 705-amino-acid chain; its full sequence is 3-hydroxypropionate--CoA ligase [ADP-forming] (705 aa).

An ATP-grasp domain is found at 25–61 (KSILKNYGVKVPPYALVTSAEEAAKEAKKIGFPLVMK). 51–61 (AKKIGFPLVMK) contacts ATP.

The protein in the N-terminal section; belongs to the acetate CoA ligase beta subunit family. In the C-terminal section; belongs to the acetate CoA ligase alpha subunit family. The cofactor is Mg(2+). It depends on Mn(2+) as a cofactor.

It catalyses the reaction 3-hydroxypropanoate + ATP + CoA = 3-hydroxypropanoyl-CoA + ADP + phosphate. Involved in thaumarchaeal hydroxypropionate/hydroxybutyrate (HP/HB) cycle, a modified version of the autotrophic HP/HB cycle of Crenarchaeota. Catalyzes the formation of 3-hydroxypropionyl-CoA, ADP and phosphate from 3-hydroxypropionate, coenzyme A (CoA) and ATP. Can also use 4-hydroxybutyrate, propionate and butyrate, with poor catalytic efficiency. The protein is 3-hydroxypropionate--CoA ligase [ADP-forming] of Nitrosopumilus maritimus (strain SCM1).